Consider the following 354-residue polypeptide: Small ribosomal subunit biogenesis GTPase RsgA 1 (354 aa).

Basic residues predominate over residues 1–24 (MAKKKKLTKGQVRRVRSNQQKRLK). The disordered stretch occupies residues 1-28 (MAKKKKLTKGQVRRVRSNQQKRLKKQEE). In terms of domain architecture, CP-type G spans 113-274 (YDGLKPVAAN…LIDSPGVREF (162 aa)). GTP contacts are provided by residues 160 to 163 (NKVD) and 214 to 222 (GQSGVGKSS). Positions 298, 303, 305, and 311 each coordinate Zn(2+).

The protein belongs to the TRAFAC class YlqF/YawG GTPase family. RsgA subfamily. Monomer. Associates with 30S ribosomal subunit, binds 16S rRNA. The cofactor is Zn(2+).

It is found in the cytoplasm. Its function is as follows. One of several proteins that assist in the late maturation steps of the functional core of the 30S ribosomal subunit. Helps release RbfA from mature subunits. May play a role in the assembly of ribosomal proteins into the subunit. Circularly permuted GTPase that catalyzes slow GTP hydrolysis, GTPase activity is stimulated by the 30S ribosomal subunit. This is Small ribosomal subunit biogenesis GTPase RsgA 1 from Vibrio parahaemolyticus serotype O3:K6 (strain RIMD 2210633).